A 535-amino-acid polypeptide reads, in one-letter code: Berberine bridge enzyme-like 27 (535 aa).

An N-terminal signal peptide occupies residues 1-22 (MEILRFLLSLFIYFLLLNLSLS). N-linked (GlcNAc...) asparagine glycans are attached at residues N18 and N66. Residues C40 and C100 are joined by a disulfide bond. The FAD-binding PCMH-type domain maps to 78–253 (ETPKPVSIIT…LSWKIRLLDV (176 aa)). A Pros-8alpha-FAD histidine modification is found at H115. N146, N215, and N439 each carry an N-linked (GlcNAc...) asparagine glycan.

It belongs to the oxygen-dependent FAD-linked oxidoreductase family. Requires FAD as cofactor. As to expression, accumulates in cell walls of etiolated hypocotyls.

It localises to the secreted. Its subcellular location is the cell wall. In Arabidopsis thaliana (Mouse-ear cress), this protein is Berberine bridge enzyme-like 27.